A 779-amino-acid chain; its full sequence is Phosphoribosylformylglycinamidine synthase subunit PurL (779 aa).

Residue histidine 52 is part of the active site. The ATP site is built by tyrosine 55 and lysine 94. Glutamate 96 is a Mg(2+) binding site. Substrate-binding positions include 97 to 100 and arginine 119; that span reads SHNH. Histidine 98 functions as the Proton acceptor in the catalytic mechanism. Aspartate 120 serves as a coordination point for Mg(2+). Glutamine 243 contributes to the substrate binding site. A Mg(2+)-binding site is contributed by aspartate 271. Substrate is bound at residue 315–317; sequence ESQ. ATP contacts are provided by asparagine 523 and glycine 560. Residue asparagine 561 participates in Mg(2+) binding. Serine 563 contributes to the substrate binding site.

It belongs to the FGAMS family. As to quaternary structure, monomer. Part of the FGAM synthase complex composed of 1 PurL, 1 PurQ and 2 PurS subunits.

The protein localises to the cytoplasm. The catalysed reaction is N(2)-formyl-N(1)-(5-phospho-beta-D-ribosyl)glycinamide + L-glutamine + ATP + H2O = 2-formamido-N(1)-(5-O-phospho-beta-D-ribosyl)acetamidine + L-glutamate + ADP + phosphate + H(+). It participates in purine metabolism; IMP biosynthesis via de novo pathway; 5-amino-1-(5-phospho-D-ribosyl)imidazole from N(2)-formyl-N(1)-(5-phospho-D-ribosyl)glycinamide: step 1/2. Part of the phosphoribosylformylglycinamidine synthase complex involved in the purines biosynthetic pathway. Catalyzes the ATP-dependent conversion of formylglycinamide ribonucleotide (FGAR) and glutamine to yield formylglycinamidine ribonucleotide (FGAM) and glutamate. The FGAM synthase complex is composed of three subunits. PurQ produces an ammonia molecule by converting glutamine to glutamate. PurL transfers the ammonia molecule to FGAR to form FGAM in an ATP-dependent manner. PurS interacts with PurQ and PurL and is thought to assist in the transfer of the ammonia molecule from PurQ to PurL. The chain is Phosphoribosylformylglycinamidine synthase subunit PurL from Prochlorococcus marinus subsp. pastoris (strain CCMP1986 / NIES-2087 / MED4).